The primary structure comprises 599 residues: MSMRSEYCGLVTEHLLGQTVSLCGWVSRRRDHGGVIFIDLRDREGLVQVVCDPDRAEMFKTAEGVRNEFCVQVKGVVRNRPEGTTNAGLKSGKIEVLCHELNVLNASVTPPFQLDDDNLSETTRLTHRVLDLRRPQMQHNLRLRYRVAMEVRKYLDSRGFIDIETPMLTKSTPEGARDYLVPSRVNAGQFFALPQSPQLFKQLLMVANFDRYYQITKCFRDEDLRADRQPEFTQIDCETSFLSEQEIRDLFEDMTRHVFKETIGVELDAKFAVMPYSEAMSRFGSDKPDLRVKLEFTELTDAMKDVDFKVFSTPANTKDGRVAALRVPKGGELSRGDIDSYTEFVRIYGAKGLAWIKINEVAKGRDGLQSPIVKNLHDAAIAAIIERTGAQDGDIIFFAADRAKVVNDSLGALRLKIGHSEFGKANGLVEAGWKPLWVVDFPMFEYDEEENRYVAAHHPFTSPKDEHLEYLETDPGRCLAKAYDIVLNGWEIGGGSVRIFQEDVQSKVFRALKIGAEEARLKFGFLLDALQYGAPPHGGIAFGLDRIVTMMAGADSIRDVIAFPKTQRAQDLLTQAPSEVDERQLRELHIRLRQPEQKA.

Residue glutamate 174 coordinates L-aspartate. Residues 198-201 form an aspartate region; sequence QLFK. Position 220 (arginine 220) interacts with L-aspartate. Residues 220–222 and glutamine 229 each bind ATP; that span reads RDE. Histidine 457 serves as a coordination point for L-aspartate. An ATP-binding site is contributed by glutamate 491. Arginine 498 contacts L-aspartate. An ATP-binding site is contributed by 543–546; sequence GLDR.

The protein belongs to the class-II aminoacyl-tRNA synthetase family. Type 1 subfamily. Homodimer.

Its subcellular location is the cytoplasm. It carries out the reaction tRNA(Asx) + L-aspartate + ATP = L-aspartyl-tRNA(Asx) + AMP + diphosphate. In terms of biological role, aspartyl-tRNA synthetase with relaxed tRNA specificity since it is able to aspartylate not only its cognate tRNA(Asp) but also tRNA(Asn). Reaction proceeds in two steps: L-aspartate is first activated by ATP to form Asp-AMP and then transferred to the acceptor end of tRNA(Asp/Asn). This is Aspartate--tRNA(Asp/Asn) ligase from Paraburkholderia phymatum (strain DSM 17167 / CIP 108236 / LMG 21445 / STM815) (Burkholderia phymatum).